The chain runs to 156 residues: MSRRTTAKKRLAVPDPIYNSRLVSMLTVRILQQGKKHLAQRIIYQALDIIKERTGEDALNILETAVRKVTPLVEVKARRIGGSTYQVPMEVRAFRGTNLALRWITKYSKERSGKSMAMKLANEIMDAVNETGNSVRKREEVHKMAEANKAFAHYRF.

The protein belongs to the universal ribosomal protein uS7 family. As to quaternary structure, part of the 30S ribosomal subunit.

Its subcellular location is the plastid. It is found in the chloroplast. One of the primary rRNA binding proteins, it binds directly to 16S rRNA where it nucleates assembly of the head domain of the 30S subunit. The sequence is that of Small ribosomal subunit protein uS7c (rps7) from Rhodomonas salina (Cryptomonas salina).